We begin with the raw amino-acid sequence, 70 residues long: Brevinin-1MT1 (70 aa).

Residues 1 to 22 form the signal peptide; it reads MFTLKKSLLLLFFLGTINLSLC. The propeptide occupies 23-44; the sequence is EQERDADEEERRDDDEMDVEVE. C64 and C70 form a disulfide bridge.

It belongs to the frog skin active peptide (FSAP) family. Brevinin subfamily. As to expression, expressed by the skin glands.

Its subcellular location is the secreted. Functionally, antimicrobial peptide with activity against a variety of Gram-negative and Gram-positive bacteria and against fungi. Shows strong hemolytic activity against human erythrocytes. The polypeptide is Brevinin-1MT1 (Amolops mantzorum (Sichuan torrent frog)).